We begin with the raw amino-acid sequence, 307 residues long: Taste receptor type 2 member 106 (307 aa).

Over 1 to 7 (MLTIPEG) the chain is Extracellular. The chain crosses the membrane as a helical span at residues 8 to 28 (ILLCFITSGSVLGVLGNGFIL). The Cytoplasmic segment spans residues 29–41 (HVNCTDCVRQKFS). The chain crosses the membrane as a helical span at residues 42–62 (TTGFIFTGLAISRICVICIII). Residues 63–81 (SDGYLKLFSPHMVASDAHI) lie on the Extracellular side of the membrane. The chain crosses the membrane as a helical span at residues 82–104 (IGISYLWIITNHTSTCFATILNL). Residues 105–124 (FYFLKIANFSHYIFFCLKRK) lie on the Cytoplasmic side of the membrane. The chain crosses the membrane as a helical span at residues 125–145 (LNTIFIFLLGCLFISWSVAFP). The Extracellular segment spans residues 146 to 179 (QTVKIFNDKMKHRNTSWKFHLHKSKFIINHILLN). Asn-159 carries N-linked (GlcNAc...) asparagine glycosylation. The helical transmembrane segment at 180-200 (LGVIFFCMVAIITSFLLIISL) threads the bilayer. Residues 201-227 (WKHNRKMQLYVSRFKSLNTEVHLKVMK) are Cytoplasmic-facing. Residues 228–248 (VLISFIILLILHVIGILIETL) traverse the membrane as a helical segment. Residues 249-257 (SFLRYENKL) are Extracellular-facing. The helical transmembrane segment at 258 to 278 (LLILGLNFSSMYPCCHSFILI) threads the bilayer. Residues 279 to 307 (LANNQLKQASLKALKQFKCHKKDKDVRET) are Cytoplasmic-facing.

It belongs to the G-protein coupled receptor T2R family.

The protein localises to the membrane. In terms of biological role, putative taste receptor which may play a role in the perception of bitterness. The sequence is that of Taste receptor type 2 member 106 from Rattus norvegicus (Rat).